The sequence spans 122 residues: Large ribosomal subunit protein uL18 (122 aa).

Positions 1–16 (MFKKVDRKASRQKKQM) are enriched in basic residues. The segment at 1–29 (MFKKVDRKASRQKKQMSIRNKISGTPERP) is disordered.

Belongs to the universal ribosomal protein uL18 family. In terms of assembly, part of the 50S ribosomal subunit; part of the 5S rRNA/L5/L18/L25 subcomplex. Contacts the 5S and 23S rRNAs.

Functionally, this is one of the proteins that bind and probably mediate the attachment of the 5S RNA into the large ribosomal subunit, where it forms part of the central protuberance. In Fusobacterium nucleatum subsp. nucleatum (strain ATCC 25586 / DSM 15643 / BCRC 10681 / CIP 101130 / JCM 8532 / KCTC 2640 / LMG 13131 / VPI 4355), this protein is Large ribosomal subunit protein uL18.